Consider the following 396-residue polypeptide: S100P-binding protein (396 aa).

The segment at 145 to 249 (CDPVLDKDKI…RKNSGSHKSG (105 aa)) is disordered. 2 stretches are compositionally biased toward basic and acidic residues: residues 148–161 (VLDK…KETE) and 168–185 (EQTR…RCTE). Composition is skewed to polar residues over residues 202-215 (SSPS…TASD) and 227-246 (VFSQ…SGSH).

As to quaternary structure, interacts with S100P.

The protein resides in the nucleus. This is S100P-binding protein from Mus musculus (Mouse).